The sequence spans 256 residues: uncharacterized protein (256 aa).

A signal peptide spans 1-24; it reads MIKRVNKLVIGISLLFLVISITAG. Cys25 carries the N-palmitoyl cysteine lipid modification. The S-diacylglycerol cysteine moiety is linked to residue Cys25.

It belongs to the staphylococcal tandem lipoprotein family.

Its subcellular location is the cell membrane. This is an uncharacterized protein from Staphylococcus aureus (strain bovine RF122 / ET3-1).